The primary structure comprises 156 residues: Ribosomal RNA large subunit methyltransferase H (156 aa).

S-adenosyl-L-methionine-binding positions include Leu73, Gly104, and 123–128; that span reads LSSLTL.

The protein belongs to the RNA methyltransferase RlmH family. In terms of assembly, homodimer.

It is found in the cytoplasm. It catalyses the reaction pseudouridine(1915) in 23S rRNA + S-adenosyl-L-methionine = N(3)-methylpseudouridine(1915) in 23S rRNA + S-adenosyl-L-homocysteine + H(+). Functionally, specifically methylates the pseudouridine at position 1915 (m3Psi1915) in 23S rRNA. This chain is Ribosomal RNA large subunit methyltransferase H, found in Bordetella bronchiseptica (strain ATCC BAA-588 / NCTC 13252 / RB50) (Alcaligenes bronchisepticus).